Here is a 310-residue protein sequence, read N- to C-terminus: Homeobox protein dsc-1 (310 aa).

Positions 180–239 (RRRFRTNFTELQSTFLEDSFKESHYPDHKAKKYMADFLKIPEDRITVWFQNRRAKWRRKE) form a DNA-binding region, homeobox. The disordered stretch occupies residues 262–310 (CFSAQHPDDGPNAKHPNSFGIPNQPMSLDQFPMNTEQDFPEFPSLQEHQ). Residues 281-298 (GIPNQPMSLDQFPMNTEQ) show a composition bias toward polar residues.

As to expression, expressed in the bilateral sensory neurons AWA, AWB, AWC, ASE, FLP and PVD. Also expressed in the enteric intestinal and anal depressor muscles.

The protein localises to the nucleus. The protein resides in the cell projection. It localises to the axon. It is found in the cytoplasm. Its function is as follows. Transcriptional regulator which plays a role in the expulsion step of defecation by controlling enteric muscle-specific expression of exp-1 which is required for enteric muscle contraction. Not required for exp-1 expression in the PDA neuron. Also involved in controlling the length of the defecation cycle. This chain is Homeobox protein dsc-1, found in Caenorhabditis elegans.